The sequence spans 911 residues: Valine--tRNA ligase (911 aa).

Positions 57-67 (PTVSGSLHVGH) match the 'HIGH' region motif. The 'KMSKS' region motif lies at 599–603 (KMSKS). K602 contributes to the ATP binding site. Residues 882-911 (EESAAEGTPETEVAVEASELGEPPAKKPKH) are disordered.

This sequence belongs to the class-I aminoacyl-tRNA synthetase family. ValS type 2 subfamily. As to quaternary structure, monomer.

The protein localises to the cytoplasm. The catalysed reaction is tRNA(Val) + L-valine + ATP = L-valyl-tRNA(Val) + AMP + diphosphate. Functionally, catalyzes the attachment of valine to tRNA(Val). As ValRS can inadvertently accommodate and process structurally similar amino acids such as threonine, to avoid such errors, it has a 'posttransfer' editing activity that hydrolyzes mischarged Thr-tRNA(Val) in a tRNA-dependent manner. The protein is Valine--tRNA ligase of Bifidobacterium longum (strain NCC 2705).